The sequence spans 302 residues: Phosphate butyryltransferase (302 aa).

The protein belongs to the phosphate acetyltransferase and butyryltransferase family.

It catalyses the reaction butanoyl-CoA + phosphate = butanoyl phosphate + CoA. It participates in lipid metabolism; butanoate metabolism. Functionally, catalyzes the conversion of butyryl-CoA through butyryl phosphate to butyrate. In Clostridium beijerinckii (strain ATCC 51743 / NCIMB 8052) (Clostridium acetobutylicum), this protein is Phosphate butyryltransferase (ptb).